We begin with the raw amino-acid sequence, 53 residues long: Light-harvesting protein B800/850/890 beta-1 chain (53 aa).

At 1 to 19 (ADNMSLTGLSDEEAKEFHS) the chain is on the cytoplasmic side. Positions 18 and 36 each coordinate a bacteriochlorophyll. Residues 20-42 (IFMQSFLIFTAVAVVAHFLAWAW) traverse the membrane as a helical segment. The Periplasmic portion of the chain corresponds to 43–53 (RPWIPGAEGYG).

Belongs to the antenna complex beta subunit family. In terms of assembly, the core complex is formed by different alpha and beta chains, binding bacteriochlorophyll molecules, and arranged most probably in tetrameric structures disposed around the reaction center. The non-pigmented gamma chains may constitute additional components.

It is found in the cell inner membrane. Functionally, antenna complexes are light-harvesting systems, which transfer the excitation energy to the reaction centers. The polypeptide is Light-harvesting protein B800/850/890 beta-1 chain (Halorhodospira halophila (strain DSM 244 / SL1) (Ectothiorhodospira halophila (strain DSM 244 / SL1))).